The primary structure comprises 311 residues: MIKLLFMGTPQFSATVLKGLLDNPAYEILGVVTQPDRAIGRKKVIKVTPVKQLALEHGISIYQPEKLSGSQELIEIMGLGADGIITAAFGQFLPTILLDSVSFAINVHASLLPKYRGGAPIHYAIMNGDKKAGVTIMEMIKEMDAGDMVAKASTPILETDNVGTLFEKLAIIGRDLLLDSLPAYLSGELKPIPQDHSQATFSPNISPEQEKLDWTMSNQEVFNHIRGMNPWPVAHTFLEGQRLKIYEAQLAEGEGLPGQVIVKTKKSLVIATGQGALSLIVVQPAGKPKMSIIDFLNGIGRKLEVGDIIGR.

110–113 (SLLP) lines the (6S)-5,6,7,8-tetrahydrofolate pocket.

This sequence belongs to the Fmt family.

It carries out the reaction L-methionyl-tRNA(fMet) + (6R)-10-formyltetrahydrofolate = N-formyl-L-methionyl-tRNA(fMet) + (6S)-5,6,7,8-tetrahydrofolate + H(+). Its function is as follows. Attaches a formyl group to the free amino group of methionyl-tRNA(fMet). The formyl group appears to play a dual role in the initiator identity of N-formylmethionyl-tRNA by promoting its recognition by IF2 and preventing the misappropriation of this tRNA by the elongation apparatus. The chain is Methionyl-tRNA formyltransferase from Streptococcus pyogenes serotype M2 (strain MGAS10270).